Here is a 180-residue protein sequence, read N- to C-terminus: MLCLLLTLGVALVCGVPAMDIPQTKQDLELPKLAGTWHSMAMATNNISLMATLKAPLRVHITSLLPTPEDNLEIVLHRWENNSCVEKKVLGEKTENPKKFKINYTVANEATLLDTDYDNFLFLCLQDTTTPIQSMMCQYLARVLVEDDEIMQGFIRAFRPLPRHLWYLLDLKQMEEPCRF.

The first 18 residues, 1 to 18 (MLCLLLTLGVALVCGVPA), serve as a signal peptide directing secretion. Residues N46 and N81 are each glycosylated (N-linked (GlcNAc...) (complex) asparagine). Intrachain disulfides connect C84-C178 and C124-C137.

The protein belongs to the calycin superfamily. Lipocalin family. Homodimer. In terms of processing, four distinct glycoforms A, C, F and S arise from different N-linked oligosaccharide chains at amino acid residues Asn-46 and Asn-81. Glycodelin-A and -F are taken up by the cumulus cells in which partial deglycosylation takes place to produce glycodelin-C. As to expression, this protein is, the main protein synthesized and secreted in the endometrium from mid-luteal phase of the menstrual cycle and during the first semester of pregnancy. Glycodelin-A is expressed in amniotic fluid, endometrium/decidua and maternal serum (at protein level). Glycodelin-F is expressed in follicular fluid, luteinized granulosa cells and the oviduct (at protein level). Glycodelin-S is expressed in seminal plasma and seminal vesicles (at protein level). Glycodelin-C is detected in cumulus cells (at protein level), but cumulus cells do not synthesize Glycodelin-C but take up and convert glycodelin-A and -F vis glycan remodeling.

It is found in the secreted. Functionally, glycoprotein that regulates critical steps during fertilization and also has immunomonomodulatory effects. Four glycoforms, namely glycodelin-S, -A, -F and -C have been identified in reproductive tissues that differ in glycosylation and biological activity. Glycodelin-A has contraceptive and immunosuppressive activities. Glycodelin-C stimulates binding of spermatozoa to the zona pellucida. Glycodelin-F inhibits spermatozoa-zona pellucida binding and significantly suppresses progesterone-induced acrosome reaction of spermatozoa. Glycodelin-S in seminal plasma maintains the uncapacitated state of human spermatozoa. In Homo sapiens (Human), this protein is Glycodelin (PAEP).